A 211-amino-acid polypeptide reads, in one-letter code: Probable GTP-binding protein EngB (211 aa).

Residues Ser-26–Ala-200 form the EngB-type G domain. GTP is bound by residues Gly-34–Ser-41, Gly-61–Leu-65, Asp-79–Gly-82, Thr-146–Asp-149, and Phe-179–Ser-181. Residues Ser-41 and Thr-63 each coordinate Mg(2+).

Belongs to the TRAFAC class TrmE-Era-EngA-EngB-Septin-like GTPase superfamily. EngB GTPase family. It depends on Mg(2+) as a cofactor.

Functionally, necessary for normal cell division and for the maintenance of normal septation. This chain is Probable GTP-binding protein EngB, found in Sodalis glossinidius (strain morsitans).